A 378-amino-acid chain; its full sequence is Ferredoxin--NADP reductase, embryo isozyme, chloroplastic (378 aa).

The N-terminal 62 residues, 1–62 (MASALGAQAS…SRHMNKIFSM (62 aa)), are a transit peptide targeting the chloroplast. Residues 93–221 (KEPYTATIVS…TGPSGKIMLL (129 aa)) form the FAD-binding FR-type domain. FAD contacts are provided by residues 153–156 (RLYS), 174–176 (CVR), Tyr-180, 195–197 (ICS), and Thr-237. The NADP(+) site is built by Ser-156 and Arg-176. Residues Thr-237, 269–270 (VA), 299–300 (SR), Lys-309, 337–338 (GL), and Glu-376 contribute to the NADP(+) site.

Belongs to the ferredoxin--NADP reductase type 1 family. It depends on FAD as a cofactor.

The protein resides in the plastid. The protein localises to the chloroplast. It catalyses the reaction 2 reduced [2Fe-2S]-[ferredoxin] + NADP(+) + H(+) = 2 oxidized [2Fe-2S]-[ferredoxin] + NADPH. Its pathway is energy metabolism; photosynthesis. Its function is as follows. May play a key role in regulating the relative amounts of cyclic and non-cyclic electron flow to meet the demands of the plant for ATP and reducing power. Is involved in nitrate assimilation. This is Ferredoxin--NADP reductase, embryo isozyme, chloroplastic from Oryza sativa subsp. japonica (Rice).